The primary structure comprises 245 residues: Uridylate kinase (245 aa).

An ATP-binding site is contributed by 18-21 (KLSG). UMP is bound at residue G60. Positions 61 and 65 each coordinate ATP. UMP-binding positions include D80 and 141 to 148 (TGNPFFTT). Residues T168, Y174, and D177 each contribute to the ATP site.

Belongs to the UMP kinase family. As to quaternary structure, homohexamer.

It is found in the cytoplasm. It catalyses the reaction UMP + ATP = UDP + ADP. It functions in the pathway pyrimidine metabolism; CTP biosynthesis via de novo pathway; UDP from UMP (UMPK route): step 1/1. With respect to regulation, inhibited by UTP. Functionally, catalyzes the reversible phosphorylation of UMP to UDP. In Pseudomonas aeruginosa (strain UCBPP-PA14), this protein is Uridylate kinase.